Reading from the N-terminus, the 284-residue chain is TnP I resolvase (284 aa).

One can recognise a Core-binding (CB) domain in the interval 1-84; the sequence is MDVAKQFSSY…SLAKFNEFLI (84 aa). The Tyr recombinase domain maps to 107–282; that stretch reads ASPTQIVELD…NQLQLKNKME (176 aa). Active-site residues include R145, K170, H234, R237, and H260. Y269 (O-(3'-phospho-DNA)-tyrosine intermediate) is an active-site residue.

This sequence belongs to the 'phage' integrase family.

In terms of biological role, resolvase catalyzes the resolution (a site-specific recombination) of the cointegrated replicon to yield the final transposition products. The protein is TnP I resolvase (tnpI) of Bacillus thuringiensis.